A 519-amino-acid polypeptide reads, in one-letter code: Methionine--tRNA ligase (519 aa).

A 'HIGH' region motif is present at residues 11-21 (AYPNAAPHVGH). The 'KMSKS' region signature appears at 299–303 (KMSKS). Position 302 (Lys302) interacts with ATP. The interval 500-519 (LPPPTGVFPRYQPPQPPEGK) is disordered.

Belongs to the class-I aminoacyl-tRNA synthetase family. MetG type 2B subfamily. Monomer.

Its subcellular location is the cytoplasm. The enzyme catalyses tRNA(Met) + L-methionine + ATP = L-methionyl-tRNA(Met) + AMP + diphosphate. Is required not only for elongation of protein synthesis but also for the initiation of all mRNA translation through initiator tRNA(fMet) aminoacylation. This is Methionine--tRNA ligase (metG) from Mycobacterium tuberculosis (strain CDC 1551 / Oshkosh).